Reading from the N-terminus, the 542-residue chain is CTP synthase (542 aa).

The tract at residues 1 to 265 (MARYVFITGG…DSEVLSAFGI (265 aa)) is amidoligase domain. Residue Ser-13 coordinates CTP. Ser-13 is a UTP binding site. 14 to 19 (SLGKGI) contributes to the ATP binding site. Position 54 (Tyr-54) interacts with L-glutamine. An ATP-binding site is contributed by Asp-71. 2 residues coordinate Mg(2+): Asp-71 and Glu-139. CTP is bound by residues 146–148 (DIE), 186–191 (KTKPTQ), and Lys-222. Residues 186-191 (KTKPTQ) and Lys-222 contribute to the UTP site. One can recognise a Glutamine amidotransferase type-1 domain in the interval 291–541 (TIAVVGKYTG…IEAAIEQSRL (251 aa)). An L-glutamine-binding site is contributed by Gly-353. Cys-380 serves as the catalytic Nucleophile; for glutamine hydrolysis. Residues 381–384 (FGMQ), Glu-404, and Arg-469 contribute to the L-glutamine site. Active-site residues include His-514 and Glu-516.

Belongs to the CTP synthase family. As to quaternary structure, homotetramer.

The catalysed reaction is UTP + L-glutamine + ATP + H2O = CTP + L-glutamate + ADP + phosphate + 2 H(+). The enzyme catalyses L-glutamine + H2O = L-glutamate + NH4(+). It catalyses the reaction UTP + NH4(+) + ATP = CTP + ADP + phosphate + 2 H(+). Its pathway is pyrimidine metabolism; CTP biosynthesis via de novo pathway; CTP from UDP: step 2/2. Its activity is regulated as follows. Allosterically activated by GTP, when glutamine is the substrate; GTP has no effect on the reaction when ammonia is the substrate. The allosteric effector GTP functions by stabilizing the protein conformation that binds the tetrahedral intermediate(s) formed during glutamine hydrolysis. Inhibited by the product CTP, via allosteric rather than competitive inhibition. Catalyzes the ATP-dependent amination of UTP to CTP with either L-glutamine or ammonia as the source of nitrogen. Regulates intracellular CTP levels through interactions with the four ribonucleotide triphosphates. The protein is CTP synthase of Brucella suis (strain ATCC 23445 / NCTC 10510).